The primary structure comprises 278 residues: 4-diphosphocytidyl-2-C-methyl-D-erythritol kinase (278 aa).

Lysine 9 is a catalytic residue. An ATP-binding site is contributed by 89–99; that stretch reads PVASGIGGGSA. Aspartate 128 is an active-site residue.

This sequence belongs to the GHMP kinase family. IspE subfamily.

The catalysed reaction is 4-CDP-2-C-methyl-D-erythritol + ATP = 4-CDP-2-C-methyl-D-erythritol 2-phosphate + ADP + H(+). It functions in the pathway isoprenoid biosynthesis; isopentenyl diphosphate biosynthesis via DXP pathway; isopentenyl diphosphate from 1-deoxy-D-xylulose 5-phosphate: step 3/6. Functionally, catalyzes the phosphorylation of the position 2 hydroxy group of 4-diphosphocytidyl-2C-methyl-D-erythritol. This Cereibacter sphaeroides (strain ATCC 17029 / ATH 2.4.9) (Rhodobacter sphaeroides) protein is 4-diphosphocytidyl-2-C-methyl-D-erythritol kinase.